Consider the following 421-residue polypeptide: Medium-chain specific acyl-CoA dehydrogenase, mitochondrial (421 aa).

The N-terminal 25 residues, 1-25, are a transit peptide targeting the mitochondrion; it reads MIALFRRSCGVLRSLSHFDWRSQHT. The residue at position 69 (K69) is an N6-acetyllysine; alternate. K69 carries the post-translational modification N6-succinyllysine; alternate. N6-acetyllysine is present on K79. FAD is bound at residue 158–167; it reads YCVTEPVAGS. S167 contacts octanoyl-CoA. The residue at position 179 (K179) is an N6-succinyllysine. 191 to 193 is an FAD binding site; sequence WIT. Position 212 is an N6-acetyllysine; alternate (K212). K212 is subject to N6-succinyllysine; alternate. S216 contributes to the octanoyl-CoA binding site. 3 positions are modified to N6-acetyllysine; alternate: K217, K259, and K271. K217, K259, and K271 each carry N6-succinyllysine; alternate. Residue D278 participates in octanoyl-CoA binding. At K279 the chain carries N6-acetyllysine. R281 serves as a coordination point for octanoyl-CoA. Position 301 is an N6-acetyllysine (K301). Residues 306–308 and 316–317 each bind FAD; these read RKT and HQ. Residues R349 and T351 each coordinate octanoyl-CoA. T351 is modified (phosphothreonine). 374 to 378 contributes to the FAD binding site; that stretch reads QIFGG. Octanoyl-CoA is bound at residue E401. E401 serves as the catalytic Proton acceptor. FAD is bound at residue 402 to 405; sequence GTAQ.

Belongs to the acyl-CoA dehydrogenase family. Homotetramer. Interacts with the heterodimeric electron transfer flavoprotein ETF. The cofactor is FAD. Post-translationally, acetylated. Could occur at proximity of the cofactor-binding sites and reduce the catalytic activity. Could be deacetylated by SIRT3.

It localises to the mitochondrion matrix. It catalyses the reaction a medium-chain 2,3-saturated fatty acyl-CoA + oxidized [electron-transfer flavoprotein] + H(+) = a medium-chain (2E)-enoyl-CoA + reduced [electron-transfer flavoprotein]. The catalysed reaction is pentanoyl-CoA + oxidized [electron-transfer flavoprotein] + H(+) = (2E)-pentenoyl-CoA + reduced [electron-transfer flavoprotein]. The enzyme catalyses hexanoyl-CoA + oxidized [electron-transfer flavoprotein] + H(+) = (2E)-hexenoyl-CoA + reduced [electron-transfer flavoprotein]. It carries out the reaction octanoyl-CoA + oxidized [electron-transfer flavoprotein] + H(+) = (2E)-octenoyl-CoA + reduced [electron-transfer flavoprotein]. It catalyses the reaction decanoyl-CoA + oxidized [electron-transfer flavoprotein] + H(+) = (2E)-decenoyl-CoA + reduced [electron-transfer flavoprotein]. The catalysed reaction is dodecanoyl-CoA + oxidized [electron-transfer flavoprotein] + H(+) = (2E)-dodecenoyl-CoA + reduced [electron-transfer flavoprotein]. The enzyme catalyses tetradecanoyl-CoA + oxidized [electron-transfer flavoprotein] + H(+) = (2E)-tetradecenoyl-CoA + reduced [electron-transfer flavoprotein]. It carries out the reaction oxidized [electron-transfer flavoprotein] + hexadecanoyl-CoA + H(+) = (2E)-hexadecenoyl-CoA + reduced [electron-transfer flavoprotein]. It participates in lipid metabolism; mitochondrial fatty acid beta-oxidation. Its function is as follows. Medium-chain specific acyl-CoA dehydrogenase is one of the acyl-CoA dehydrogenases that catalyze the first step of mitochondrial fatty acid beta-oxidation, an aerobic process breaking down fatty acids into acetyl-CoA and allowing the production of energy from fats. The first step of fatty acid beta-oxidation consists in the removal of one hydrogen from C-2 and C-3 of the straight-chain fatty acyl-CoA thioester, resulting in the formation of trans-2-enoyl-CoA. Electron transfer flavoprotein (ETF) is the electron acceptor that transfers electrons to the main mitochondrial respiratory chain via ETF-ubiquinone oxidoreductase (ETF dehydrogenase). Among the different mitochondrial acyl-CoA dehydrogenases, medium-chain specific acyl-CoA dehydrogenase acts specifically on acyl-CoAs with saturated 6 to 12 carbons long primary chains. The polypeptide is Medium-chain specific acyl-CoA dehydrogenase, mitochondrial (Bos taurus (Bovine)).